Here is a 525-residue protein sequence, read N- to C-terminus: ATP synthase subunit alpha (525 aa).

Position 169–176 (169–176) interacts with ATP; it reads GDRQTGKT.

Belongs to the ATPase alpha/beta chains family. As to quaternary structure, F-type ATPases have 2 components, CF(1) - the catalytic core - and CF(0) - the membrane proton channel. CF(1) has five subunits: alpha(3), beta(3), gamma(1), delta(1), epsilon(1). CF(0) has three main subunits: a(1), b(2) and c(9-12). The alpha and beta chains form an alternating ring which encloses part of the gamma chain. CF(1) is attached to CF(0) by a central stalk formed by the gamma and epsilon chains, while a peripheral stalk is formed by the delta and b chains.

It localises to the cell membrane. It catalyses the reaction ATP + H2O + 4 H(+)(in) = ADP + phosphate + 5 H(+)(out). In terms of biological role, produces ATP from ADP in the presence of a proton gradient across the membrane. The alpha chain is a regulatory subunit. The chain is ATP synthase subunit alpha from Mesoplasma florum (strain ATCC 33453 / NBRC 100688 / NCTC 11704 / L1) (Acholeplasma florum).